A 558-amino-acid polypeptide reads, in one-letter code: Energy-dependent translational throttle protein EttA (558 aa).

ABC transporter domains lie at 6–256 (YTMK…AVQG) and 322–552 (VEVD…RVTH). 38–45 (GPNGAGKS) lines the ATP pocket. The interval 94–136 (GDIKIKLDRFNEVAELMATDYTDELMEEMGRLQEELDHADAWD) is arm. The ptIM stretch occupies residues 239–320 (GNYSTYLEKK…IPVGPRLGNV (82 aa)). 354-361 (GPNGVGKT) is an ATP binding site.

The protein belongs to the ABC transporter superfamily. ABCF family. Translational throttle EttA subfamily. In terms of assembly, monomer. Probably contacts ribosomal proteins L1, L5, L33 and S7, the 16S and 23S rRNA and the P-site containing tRNA(fMet).

The protein localises to the cytoplasm. It carries out the reaction ATP + H2O = ADP + phosphate + H(+). A translation factor that gates the progression of the 70S ribosomal initiation complex (IC, containing tRNA(fMet) in the P-site) into the translation elongation cycle by using a mechanism sensitive to the ATP/ADP ratio. Binds to the 70S ribosome E-site where it modulates the state of the translating ribosome during subunit translocation. ATP hydrolysis probably frees it from the ribosome, which can enter the elongation phase. The polypeptide is Energy-dependent translational throttle protein EttA (Mycobacterium tuberculosis (strain CDC 1551 / Oshkosh)).